Here is a 291-residue protein sequence, read N- to C-terminus: 3-hydroxy-5-phosphonooxypentane-2,4-dione thiolase (291 aa).

The active-site Schiff-base intermediate with substrate is Lys-203.

It belongs to the DeoC/FbaB aldolase family. Homodecamer.

The protein resides in the cytoplasm. It catalyses the reaction dihydroxyacetone phosphate + acetyl-CoA = 3-hydroxy-2,4-dioxopentyl phosphate + CoA. Functionally, involved in the degradation of phospho-AI-2, thereby terminating induction of the lsr operon and closing the AI-2 signaling cycle. Catalyzes the transfer of an acetyl moiety from 3-hydroxy-5-phosphonooxypentane-2,4-dione to CoA to form glycerone phosphate and acetyl-CoA. This Salmonella typhimurium (strain LT2 / SGSC1412 / ATCC 700720) protein is 3-hydroxy-5-phosphonooxypentane-2,4-dione thiolase.